A 381-amino-acid polypeptide reads, in one-letter code: N-acetyl-alpha-D-glucosaminyl L-malate synthase (381 aa).

(S)-malate contacts are provided by S16, Y94, and T122. Positions 206, 262, and 290 each coordinate UDP.

Belongs to the glycosyltransferase group 1 family. Glycosyltransferase 4 subfamily. As to quaternary structure, dimer of tetramers.

It catalyses the reaction (S)-malate + UDP-N-acetyl-alpha-D-glucosamine = (S)-malyl N-acetyl-alpha-D-glucosaminide + UDP + H(+). Involved in bacillithiol (BSH) biosynthesis. Catalyzes the first step of the pathway, the formation of N-acetylglucosaminylmalate (GlcNAc-Mal) from UDP-N-acetylglucosamine (UDP-GlcNAc) and L-malate. This chain is N-acetyl-alpha-D-glucosaminyl L-malate synthase, found in Bacillus anthracis.